A 1340-amino-acid chain; its full sequence is MGNVEIPNWLKALPLAPVFRPTDTEFADPIAYISKIEKEASAFGICKIIPPLPKPSKKYVFYNLNKSLLKCPELVSDVDISKVCKEDRAVFTTRQQELGQTVKKNKGEKGKSNSQRSGVKQVWQSGGVYTLDQFEAKSKAFYKTQLGTVKELAPVVIEALFWKAALEKPIYIEYANDVPGSAFGEPEDHFRHFRQRKRRGRGFYQRKTENNDPSGKNGEKSSPEVEKAPLASTSLSSQDSSKQKNMDIVDEMEGTAGWKLSNSSWNLQMIARSPGSVTRFMPDDIPGVTSPMVYIGMLFSWFAWHVEDHELHSMNYLHTGSPKTWYAVPCDYALDFEEVIRKNSYGRNIDQLAALTQLGEKTTLVSPEMIVASGIPCCRLVQNPGEFVVTFPRSYHVGFSHGFNCGEAANFGTPQWLNVAKEAAVRRAAMNYLPMLSHQQLLYLLTMSFVSRVPRSLLPGGRSSRLRDRQREEREFLVKRAFVEDILNENKNLSVLLREPGSRLVMWDPDLLPRHSALALAAAGVAGASAVSPPAVAKKELEEGHSELQNKEKTSLLEELSLFMEKLNDVYYDDDDGLLNDFQVDTGTLPCVACGVLGFPFMSVVQPSEKALKDLSERQGETDAQEIMTLSSEKSDCEWKTSSRYIRPRIFCLEHTIELQRLLQSRGGLKFLVICHKDFQKFKAHAAIVAEEVKVPFSYDDVLLESASQEELSLIDLAIEDEEKYEHSVDWTSELGINLRYCVKVRKNSPTKKIQHALSLGGLFSDTSQMLDFTTIRWLQRKSRSKAKPSSTSSFTPCEHLEVKADGKLRDNLDSQTGKKEEKIIQYSRKKKLNPKPSAEQVQELATLAKSKDFDKTCKNFSSRSHLDSAIRSEMNSEIGDSGRVIGVSFSINPCSSSFTVGHGQEHPEITVKFGSDLDGNVTNSLSMVNGDSADLTLTSISREQHQGHSMTSNNNGSNSGSHVVASQTILVSTGDNHDGPRKLSGDYVCSDVSVRGIQEAVEMSDQEFGEPRSTVTNIEDEQQSQIVKPTQREAVFGDHEQVEGAEAVSTRENLCSEIILHTEHSSAHVGMEIPDINTASENLVVDMTHDGEPLESSDILSSSNGDEASSNGLQVLNDELSMESEVSSSENTEVIEAPNSMGEAKKKRKIESESETNDNPESSIGFIRSPCEGLRSRGKRKATCETSLKHTETSDEEKKPIAKRLKKTPKACSGSRQQEVPTTTHPNRCYLEGCKMTFESKAKLQTHKRNRCTHEGCGKKFRAHKYLVLHQRVHKDERPFECSWKGCSMTFKWQWARTEHLRLHTGERPYICKVDGCGLSFRFVSDYSRHRRKTMHYVT.

The 42-residue stretch at 16 to 57 folds into the JmjN domain; that stretch reads APVFRPTDTEFADPIAYISKIEKEASAFGICKIIPPLPKPSK. Residues 195-245 are disordered; that stretch reads QRKRRGRGFYQRKTENNDPSGKNGEKSSPEVEKAPLASTSLSSQDSSKQKN. Over residues 217-227 the composition is skewed to basic and acidic residues; the sequence is NGEKSSPEVEK. Residues 262–428 form the JmjC domain; that stretch reads NSSWNLQMIA…VAKEAAVRRA (167 aa). 3 residues coordinate Fe cation: H305, E307, and H396. The Nuclear localization signal 1 signature appears at 818–825; that stretch reads GKKEEKII. A disordered region spans residues 1092-1225; that stretch reads GEPLESSDIL…SRQQEVPTTT (134 aa). A compositionally biased stretch (polar residues) spans 1099-1115; sequence DILSSSNGDEASSNGLQ. Positions 1124–1133 are enriched in low complexity; that stretch reads ESEVSSSENT. Residues 1188-1201 show a composition bias toward basic and acidic residues; it reads SLKHTETSDEEKKP. Positions 1215-1225 are enriched in polar residues; the sequence is GSRQQEVPTTT. C2H2-type zinc fingers lie at residues 1228–1250, 1251–1275, 1281–1305, and 1311–1337; these read NRCY…THKR, NRCT…QRVH, FECS…LRLH, and YICK…KTMH. Zn(2+) contacts are provided by C1230, C1235, H1248, C1253, C1258, H1265, H1271, H1275, C1283, C1288, H1301, H1305, C1313, C1318, H1331, and H1337. The Nuclear localization signal 2 motif lies at 1248–1255; that stretch reads HKRNRCTH. The interval 1260-1333 is DNA-binding; the sequence is KKFRAHKYLV…FVSDYSRHRR (74 aa).

This sequence belongs to the JHDM3 histone demethylase family. As to quaternary structure, interacts with BZR2 (via N-terminus). Expressed at low levels in seedlings, cotyledons and leaves. Detected in inflorescences, stems, roots and siliques but not in shoot apical meristems or root tips. Accumulates in flowers and embryos.

The protein localises to the nucleus. It carries out the reaction N(6),N(6),N(6)-trimethyl-L-lysyl(27)-[histone H3] + 2-oxoglutarate + O2 = N(6),N(6)-dimethyl-L-lysyl(27)-[histone H3] + formaldehyde + succinate + CO2. The catalysed reaction is N(6),N(6)-dimethyl-L-lysyl(27)-[histone H3] + 2-oxoglutarate + O2 = N(6)-methyl-L-lysyl(27)-[histone H3] + formaldehyde + succinate + CO2. In terms of biological role, histone demethylase that demethylates 'Lys-27' (H3K27me) of histone H3, thus acting as a positive regulator of gene expression. Demethylates tri-methylated (H3K27me3) and di-methylated (H3K27me2) H3K27me. Inactive on H3K27me1, H3K4me3, H3K9me2 and H3K36me3. Acts as a repressor of the photoperiodic flowering pathway and of FT. May also be active on H3K4me. Binds around the transcription start site of the FT locus. Required for epigenetic reprogramming by resetting the expression of the floral repressor FLC locus, thus aluviating cold-mediated FLC epigenetically silencing occurring during vernalization and preventing inapropriate epigenetic states inheritence. Together with REF6, required for H3K27me3 resetting (especially in constitutive heterochromatin within the pericentromeric regions) and transgenerational inheritance of histone marks, thus acting in safeguarding genome and epigenome integrity during sexual reproduction. The sequence is that of Lysine-specific demethylase ELF6 from Arabidopsis thaliana (Mouse-ear cress).